Reading from the N-terminus, the 332-residue chain is L-lactate dehydrogenase A chain (332 aa).

N-acetylalanine is present on alanine 2. Residue lysine 5 is modified to N6-acetyllysine; alternate. An N6-succinyllysine; alternate modification is found at lysine 5. Lysine 14 bears the N6-acetyllysine mark. 29-57 (GAVGMACAISILMKDLADEVALVDVMEDK) provides a ligand contact to NAD(+). At lysine 57 the chain carries N6-acetyllysine; alternate. Residue lysine 57 forms a Glycyl lysine isopeptide (Lys-Gly) (interchain with G-Cter in SUMO2); alternate linkage. At lysine 81 the chain carries N6-acetyllysine. Arginine 106 provides a ligand contact to substrate. Lysine 118 carries the N6-acetyllysine; alternate modification. Lysine 118 carries the post-translational modification N6-succinyllysine; alternate. At lysine 126 the chain carries N6-acetyllysine. Asparagine 138 is an NAD(+) binding site. Substrate is bound by residues asparagine 138 and arginine 169. The Proton acceptor role is filled by histidine 193. An N6-acetyllysine mark is found at lysine 224 and lysine 232. Tyrosine 239 is modified (phosphotyrosine). The residue at position 243 (lysine 243) is an N6-acetyllysine. Residue threonine 248 participates in substrate binding. Position 309 is a phosphothreonine (threonine 309). An N6-acetyllysine; alternate modification is found at lysine 318. Lysine 318 is subject to N6-succinyllysine; alternate. The residue at position 322 (threonine 322) is a Phosphothreonine.

This sequence belongs to the LDH/MDH superfamily. LDH family. In terms of assembly, homotetramer. Interacts with PTEN upstream reading frame protein MP31. ISGylated.

The protein resides in the cytoplasm. It carries out the reaction (S)-lactate + NAD(+) = pyruvate + NADH + H(+). Its pathway is fermentation; pyruvate fermentation to lactate; (S)-lactate from pyruvate: step 1/1. In terms of biological role, interconverts simultaneously and stereospecifically pyruvate and lactate with concomitant interconversion of NADH and NAD(+). The chain is L-lactate dehydrogenase A chain (LDHA) from Bos mutus grunniens (Wild yak).